The primary structure comprises 332 residues: MSTTKRSVTTRPSTSSRNVPRGIWELARLHTRESWLCWYPSIWGACVAAGVSDTVLEPLAFARFLFGIWASVTATHCAFCTFKSVPFCFFVVPRYSSDYWHLDKHVQRCKVRPLPSGMISTPEALLAFVCWVPFTFAITWATLGPAVTVSFIPVWVLSVIYPFMKRLMPFPQVVLGAIIGGAVFPGWVGVTGDLDHLDQALPLFFATAAWVVYFDVFYATQDLPDDKKAGVKSLAVWMGPNVKILLAGLGILQIAFFAMTALRADLSLIFWILGIGVWAVSVPWHVLSLNLKDRHSGGSVFKANIKLGLYMTGVSLLELVLLRVHHAPMKVY.

A run of 8 helical transmembrane segments spans residues 42–62 (IWGA…LAFA), 72–92 (VTAT…FFVV), 145–165 (PAVT…PFMK), 170–190 (FPQV…WVGV), 200–220 (ALPL…FYAT), 242–262 (VKIL…MTAL), 266–286 (LSLI…PWHV), and 300–320 (VFKA…LELV).

It belongs to the UbiA prenyltransferase family. Mg(2+) is required as a cofactor.

Its subcellular location is the membrane. It functions in the pathway secondary metabolite biosynthesis; terpenoid biosynthesis. In terms of biological role, polyprenyl transferase; part of the gene cluster that mediates the biosynthesis of yanuthone D, a fungal isoprenoid epoxycyclohexenone that acts as an antibiotic against fungi and bacteria. The first step of the pathway is the synthesis of 6-methylsalicylic acid (6-MSA) by the polyketide synthase yanA. 6-MSA is then converted to m-cresol by the decarboxylase yanB. The cytochrome P450 monooxygenase yanC then catalyzes the oxidation of m-cresol to toluquinol. Epoxidation of toluquinol is then performed by the short chain dehydrogenase yanD, with the help of yanE, and a further prenylation by yanG leads to 7-deacetoxyyanuthone A. The next step is the hydroxylation of C-22 of 7-deacetoxyyanuthone A by the cytochrome P450 monooxygenase yanH to yield 22-deacetylyanuthone A. O-Mevalon transferase yanI then attaches mevalon to the hydroxyl group of 22-deacetylyanuthone A to produce yanuthone E. Finally, the FAD-dependent monooxygenase yanF oxidizes the hydroxyl group at C15 of yanuthone E to form yanuthone D. Furthermore, several branching points in the pathway lead to the production of yanuthones F and G from 7-deacetoxyyanuthone A; yanuthones H and I from 22-deacetylyanuthone A; and yanuthone J from yanuthone E. YanG is also involved in the synthesis of yanuthone X1 which does not have 6-methylsalicylic acid (6-MSA) as precursor. The protein is Polyprenyl transferase yanG of Aspergillus niger (strain ATCC 1015 / CBS 113.46 / FGSC A1144 / LSHB Ac4 / NCTC 3858a / NRRL 328 / USDA 3528.7).